Here is a 214-residue protein sequence, read N- to C-terminus: Ribosomal RNA small subunit methyltransferase G (214 aa).

S-adenosyl-L-methionine is bound by residues G81, M86, 132–133, and R147; that span reads AE.

This sequence belongs to the methyltransferase superfamily. RNA methyltransferase RsmG family.

The protein localises to the cytoplasm. It carries out the reaction guanosine(527) in 16S rRNA + S-adenosyl-L-methionine = N(7)-methylguanosine(527) in 16S rRNA + S-adenosyl-L-homocysteine. Its function is as follows. Specifically methylates the N7 position of guanine in position 527 of 16S rRNA. This is Ribosomal RNA small subunit methyltransferase G from Pseudomonas syringae pv. syringae (strain B728a).